The sequence spans 288 residues: Hemin import ATP-binding protein HmuV (288 aa).

Residues 31-269 (LRARGLVVER…DLLTRVYQHP (239 aa)) enclose the ABC transporter domain. 68 to 75 (GPNGAGKS) lines the ATP pocket.

This sequence belongs to the ABC transporter superfamily. Heme (hemin) importer (TC 3.A.1.14.5) family. In terms of assembly, the complex is composed of two ATP-binding proteins (HmuV), two transmembrane proteins (HmuU) and a solute-binding protein (HmuT).

It is found in the cell membrane. Functionally, part of the ABC transporter complex HmuTUV involved in hemin import. Responsible for energy coupling to the transport system. The protein is Hemin import ATP-binding protein HmuV of Nocardia farcinica (strain IFM 10152).